The primary structure comprises 523 residues: GMP synthase [glutamine-hydrolyzing] (523 aa).

Residues 8–205 (KILILDFGSQ…VVNICGCATN (198 aa)) form the Glutamine amidotransferase type-1 domain. C85 (nucleophile) is an active-site residue. Active-site residues include H179 and E181. The GMPS ATP-PPase domain occupies 206–398 (WTPENIIEDA…LGLPAEMLNR (193 aa)). 233–239 (SGGVDSS) contributes to the ATP binding site.

Homodimer.

The catalysed reaction is XMP + L-glutamine + ATP + H2O = GMP + L-glutamate + AMP + diphosphate + 2 H(+). Its pathway is purine metabolism; GMP biosynthesis; GMP from XMP (L-Gln route): step 1/1. Functionally, catalyzes the synthesis of GMP from XMP. This chain is GMP synthase [glutamine-hydrolyzing], found in Actinobacillus succinogenes (strain ATCC 55618 / DSM 22257 / CCUG 43843 / 130Z).